The chain runs to 299 residues: Anti-sigma-D factor RsdA (299 aa).

Residues 86 to 106 (LAAVGSVAAALLVLSGFGAVV) form a helical membrane-spanning segment. Residues 187-299 (NTKVETRDPN…APETPVSPTH (113 aa)) form a disordered region. Low complexity-rich tracts occupy residues 201–212 (PGSPSNPAAPGS) and 250–271 (PNSTSTVAASPSTPSSKPEPGS).

Interacts with ECF RNA polymerase sigma factor SigD; this should inhibit the interaction of SigD with the RNA polymerase catalytic core. In terms of processing, the cytosolic fragment is degraded by a ClpP1-ClpP2-ClpX complex, as would be expected after S1P and S2P intramembrane proteolysis. This releases SigD so that it may bind to the RNA polymerase catalytic core.

Its subcellular location is the cell membrane. Functionally, an anti-sigma factor for extracytoplasmic function (ECF) sigma factor SigD. ECF sigma factors are held in an inactive form by an anti-sigma factor until released by regulated intramembrane proteolysis (RIP). RIP occurs when an extracytoplasmic signal triggers a concerted proteolytic cascade to transmit information and elicit cellular responses. The membrane-spanning regulatory substrate protein is first cut extracytoplasmically (site-1 protease, S1P), then within the membrane itself (site-2 protease, S2P), while cytoplasmic proteases finish degrading the regulatory protein, liberating the sigma factor. Neither S1P nor S2P proteases have been so far identified for this anti-sigma factor. The protein is Anti-sigma-D factor RsdA (rsda) of Mycobacterium bovis (strain ATCC BAA-935 / AF2122/97).